We begin with the raw amino-acid sequence, 92 residues long: Small ribosomal subunit protein uS19 (92 aa).

This sequence belongs to the universal ribosomal protein uS19 family.

In terms of biological role, protein S19 forms a complex with S13 that binds strongly to the 16S ribosomal RNA. This chain is Small ribosomal subunit protein uS19, found in Photorhabdus laumondii subsp. laumondii (strain DSM 15139 / CIP 105565 / TT01) (Photorhabdus luminescens subsp. laumondii).